Consider the following 912-residue polypeptide: Rho guanine nucleotide exchange factor 1 (912 aa).

An RGSL domain is found at 41 to 232 (EQNSQFQSLE…GLYMRHLGVR (192 aa)). The disordered stretch occupies residues 248-413 (KVMGNRRSDE…PDTLHSLPKS (166 aa)). The segment covering 283–313 (DFRHLKAEVDAEKPGATDRKGGVGMPSRDRN) has biased composition (basic and acidic residues). Residues 365–381 (STDEGAETESPEPGDEG) show a composition bias toward acidic residues. Residues serine 374 and serine 409 each carry the phosphoserine modification. One can recognise a DH domain in the interval 416–605 (KRQEVISELL…REILHHVNQA (190 aa)). One can recognise a PH domain in the interval 647 to 760 (KLVHEGPLTW…WCALITETAG (114 aa)). Threonine 695 carries the phosphothreonine modification. A Phosphotyrosine; by JAK2 modification is found at tyrosine 738. Disordered stretches follow at residues 763–802 (KVPA…PADA) and 841–865 (AEED…LSPA). Residues 777 to 789 (PSSTREPLLSSSE) show a composition bias toward low complexity. At serine 863 the chain carries Phosphoserine. Residues 865–896 (ARTQEIQENLLSLEETMKQLEELEEEFCRLRP) adopt a coiled-coil conformation.

As to quaternary structure, interacts with RHOA, GNA12 and GNA13. Homooligomerizes through the coiled coil region. May interact with CCPG1. Interacts with CTNNAL1. In terms of processing, phosphorylated by PKCA. Angiotensin-2 induced Tyr-738 phosphorylation is mediated by JAK2. In terms of tissue distribution, ubiquitously expressed.

The protein resides in the cytoplasm. It localises to the membrane. Functionally, seems to play a role in the regulation of RhoA GTPase by guanine nucleotide-binding alpha-12 (GNA12) and alpha-13 (GNA13) subunits. Acts as a GTPase-activating protein (GAP) for GNA12 and GNA13, and as guanine nucleotide exchange factor (GEF) for RhoA GTPase. Activated G alpha 13/GNA13 stimulates the RhoGEF activity through interaction with the RGS-like domain. This GEF activity is inhibited by binding to activated GNA12. Mediates angiotensin-2-induced RhoA activation. In lymphoid follicles, may trigger activation of GNA13 as part of S1PR2-dependent signaling pathway that leads to inhibition of germinal center (GC) B cell growth and migration outside the GC niche. In Homo sapiens (Human), this protein is Rho guanine nucleotide exchange factor 1 (ARHGEF1).